The sequence spans 251 residues: Imidazole glycerol phosphate synthase subunit HisF (251 aa).

Active-site residues include aspartate 11 and aspartate 130.

The protein belongs to the HisA/HisF family. In terms of assembly, heterodimer of HisH and HisF.

It localises to the cytoplasm. It carries out the reaction 5-[(5-phospho-1-deoxy-D-ribulos-1-ylimino)methylamino]-1-(5-phospho-beta-D-ribosyl)imidazole-4-carboxamide + L-glutamine = D-erythro-1-(imidazol-4-yl)glycerol 3-phosphate + 5-amino-1-(5-phospho-beta-D-ribosyl)imidazole-4-carboxamide + L-glutamate + H(+). The protein operates within amino-acid biosynthesis; L-histidine biosynthesis; L-histidine from 5-phospho-alpha-D-ribose 1-diphosphate: step 5/9. In terms of biological role, IGPS catalyzes the conversion of PRFAR and glutamine to IGP, AICAR and glutamate. The HisF subunit catalyzes the cyclization activity that produces IGP and AICAR from PRFAR using the ammonia provided by the HisH subunit. This is Imidazole glycerol phosphate synthase subunit HisF from Chlorobaculum parvum (strain DSM 263 / NCIMB 8327) (Chlorobium vibrioforme subsp. thiosulfatophilum).